We begin with the raw amino-acid sequence, 254 residues long: Ribosomal protein L11 methyltransferase (254 aa).

T107, G128, D149, S175, and N191 together coordinate S-adenosyl-L-methionine.

Belongs to the methyltransferase superfamily. PrmA family.

The protein resides in the cytoplasm. It carries out the reaction L-lysyl-[protein] + 3 S-adenosyl-L-methionine = N(6),N(6),N(6)-trimethyl-L-lysyl-[protein] + 3 S-adenosyl-L-homocysteine + 3 H(+). It catalyses the reaction an N-terminal L-alpha-aminoacyl-[protein] + 3 S-adenosyl-L-methionine = an N-terminal trimethyl-L-alpha-aminoacyl-[protein] + 3 S-adenosyl-L-homocysteine + 3 H(+). In terms of biological role, methylates ribosomal protein L11. Preferentially recognizes free L11 before its incorporation into 50S subunits. This function is dispensable for growth and thermostability. The protein is Ribosomal protein L11 methyltransferase of Thermus thermophilus (strain ATCC 27634 / DSM 579 / HB8).